Consider the following 82-residue polypeptide: Probable [Fe-S]-dependent transcriptional repressor (82 aa).

4 residues coordinate iron-sulfur cluster: Cys56, Cys61, Cys64, and Cys71.

It belongs to the FeoC family.

Functionally, may function as a transcriptional regulator that controls feoABC expression. This Yersinia enterocolitica serotype O:8 / biotype 1B (strain NCTC 13174 / 8081) protein is Probable [Fe-S]-dependent transcriptional repressor.